The sequence spans 52 residues: Metchnikowin (52 aa).

The first 24 residues, 1-24 (MQLNLGAIFLALLGVMATATSVLA), serve as a signal peptide directing secretion. Positions 25–26 (EP) are excised as a propeptide. The tract at residues 28 to 52 (RHQGPIFDTRPSPFNPNQPRPGPIY) is disordered. A compositionally biased stretch (pro residues) spans 40–52 (PFNPNQPRPGPIY).

In terms of tissue distribution, hemolymph (at protein level). Highest expression in fat body.

It localises to the secreted. Its function is as follows. Potent antifungal and antibacterial activity against Gram-positive bacteria. In Drosophila melanogaster (Fruit fly), this protein is Metchnikowin (Mtk).